A 156-amino-acid polypeptide reads, in one-letter code: Ribosome maturation factor RimP (156 aa).

Belongs to the RimP family.

Its subcellular location is the cytoplasm. Its function is as follows. Required for maturation of 30S ribosomal subunits. The polypeptide is Ribosome maturation factor RimP (Oenococcus oeni (strain ATCC BAA-331 / PSU-1)).